Consider the following 243-residue polypeptide: Probable transcriptional regulatory protein LCA_1307 (243 aa).

The interval 1–21 is disordered; sequence MSGHSKWHNIQGRKNAQDAKR.

It belongs to the TACO1 family.

Its subcellular location is the cytoplasm. In Latilactobacillus sakei subsp. sakei (strain 23K) (Lactobacillus sakei subsp. sakei), this protein is Probable transcriptional regulatory protein LCA_1307.